We begin with the raw amino-acid sequence, 212 residues long: Uridine kinase (212 aa).

13–20 (GASASGKS) lines the ATP pocket.

It belongs to the uridine kinase family.

Its subcellular location is the cytoplasm. The enzyme catalyses uridine + ATP = UMP + ADP + H(+). It carries out the reaction cytidine + ATP = CMP + ADP + H(+). Its pathway is pyrimidine metabolism; CTP biosynthesis via salvage pathway; CTP from cytidine: step 1/3. It participates in pyrimidine metabolism; UMP biosynthesis via salvage pathway; UMP from uridine: step 1/1. This Shewanella baltica (strain OS223) protein is Uridine kinase.